Here is a 373-residue protein sequence, read N- to C-terminus: Dimethylallyltryptophan synthase CymD (373 aa).

Aspartate 55, valine 56, and glutamate 64 together coordinate L-tryptophan. Catalysis depends on glutamate 64, which acts as the Nucleophile. The dimethylallyl diphosphate site is built by glutamine 77, lysine 146, tryptophan 148, arginine 205, and lysine 207. Arginine 211 provides a ligand contact to L-tryptophan. Tyrosine 274 contributes to the dimethylallyl diphosphate binding site. Position 326 (tyrosine 326) interacts with L-tryptophan. Residues arginine 337, lysine 339, and tyrosine 341 each coordinate dimethylallyl diphosphate. Residues 346–373 (MHDVTPPPLGVSQQHHLSGQTTARGRTE) form the FtsK domain.

In terms of biological role, dimethylallyltryptophan synthase; part of the gene cluster that mediates the biosynthesis of cyclic heptapeptides, known as cyclomarins and also of cyclic dipeptides, called cyclomarazines, which have both antimicrobial and cytotoxic effects. Catalyzes the reverse N-prenylation of monomeric L-tryptophan with dimethylallyl diphosphate (DMAPP) to form N-(1,1-dimethylallyl)-tryptophan (r-N-DMAT). The formation of r-N-DMAT appears to proceed via the deprotonation of the indole nitrogen of tryptophan, which facilitates a nucleophilic attack on the carbocation that is forming on the dimethylallyl group as the diphosphate dissociates. The N-(1,1-dimethylallyl)-tryptophan produced by CymD is combined with a range of standard and nonproteinogenic amino acid substrates to synthesize the peptides, a process that is probably catalyzed by the non-canonical nonribosomal peptide synthetase (NRPS), CymA. Other proteins in the cluster catalyze further modifications of the peptides including CymV which catalyzes the oxidation of olefinic cyclomarins and cyclomarazines to their respective epoxide derivatives. Utilizes only DMAPP as the prenyl donor and has no requirement for divalent cations. This is Dimethylallyltryptophan synthase CymD from Salinispora arenicola (strain CNS-205).